The following is a 219-amino-acid chain: RPA-interacting protein (219 aa).

S18 is modified (phosphoserine). Residue K121 forms a Glycyl lysine isopeptide (Lys-Gly) (interchain with G-Cter in SUMO); in isoform 2 linkage. An RIP-type zinc finger spans residues 137 to 212 (CPVCTKYNLR…SSLLMSCLAC (76 aa)). The mediates nuclear export stretch occupies residues 164 to 180 (SSELTEQKLRACLEGSI).

In terms of assembly, interacts with the RPA1 subunit of RPA complex. Post-translationally, sumoylated. Sumoylation is required for localization in the nuclear PML body and transport of RPA complex in PML body. Upon UV irradiation and during S phase, it is desumoylated, releasing RPA complex that is translocated to sites of DNA damage. Sumoylation takes place at different Lys residues. Variant 'Lys-103' adds a sumoylation site and increases total sumoylation levels. As to expression, widely expressed. Expressed in pancreas, kidney, muscle, liver, lung, placenta, brain, heart, leukocytes, colon, intestine, ovary, testis, prostate, thymus and spleen.

It localises to the cytoplasm. It is found in the nucleus. The protein localises to the PML body. Functionally, mediates the import of RPA complex into the nucleus, possibly via some interaction with importin beta. Isoform 2 is sumoylated and mediates the localization of RPA complex into the PML body of the nucleus, thereby participating in RPA function in DNA metabolism. In Homo sapiens (Human), this protein is RPA-interacting protein (RPAIN).